Consider the following 82-residue polypeptide: Small ribosomal subunit protein uS17 (82 aa).

This sequence belongs to the universal ribosomal protein uS17 family. Part of the 30S ribosomal subunit.

Functionally, one of the primary rRNA binding proteins, it binds specifically to the 5'-end of 16S ribosomal RNA. This chain is Small ribosomal subunit protein uS17, found in Rhodopseudomonas palustris (strain HaA2).